Here is a 788-residue protein sequence, read N- to C-terminus: MGSADSKLNFRKAVIQLTTKTQPVEATDNAFWDQFWADTATSVQDVFALVPAAEIRAVREESPSNLATLCYKAVEKLVQGAEGGCHSEKEKQVVLNCSRLLTRVLPYIFEDPDWRGFFWSTVPGAGRGGQGEEEDENARPLAESLLLAIADLLFCPDFTVQNHRRNDVDSAEDVHSLDSCEYIWEAGVGFAHSPQPNYIHDMNRMELLKLLLTCFSEAMYLPPSPESGSTNPWVQFFCSTENRHALPLFTSLLNTVCAYDPVGYGIPYNHLLFSDYREPLVEEAAQVLIVTLDHDSATSTSPTVDGTTTGTAMDDADPPGPENLFVNYLSRIHREEDFQFILKGIARLLSNPLLQTYLPNSTKKIQFHQELLVLFWKLCDFNKKFLFFVLKSSDVLDILVPILYFLNDARADQSRVGLMHIGVFILLLLSGERNFGVRLNKPYSVRVPMDIPVFTGTHADLLIVVFHKIITSGHQRLQPLFDCLLTIVVNVSPYLKSLSMVTANKLLHLLEAFSTTWFLFSASQNHHLVFFLLEVFNNIIQYQFDGNSNLVYAIIRKRAVFHQLANLPTDPPSIHKALQRRRRTPEPLSRTGSQEGTSMEGSRPAAPAEPGTLKTSLVATPGIDKLTEKSQVSEDGTLRSLEPESQQSSAENSPSDGESSQTWREQRRLSNASASGQWSPTSDWILSWKSKLPLQTIMRLLQVLVPQVEKICIDKGLTDESEILRFLQHGTLVGLLPVPHPILIRKYQANSGTAMWFRTYMWGVIYLRNVDPPIWYDTDVKLFEIQRV.

Gly-2 is lipidated: N-myristoyl glycine. A compositionally biased stretch (low complexity) spans 297-313 (ATSTSPTVDGTTTGTAM). Disordered regions lie at residues 297 to 316 (ATST…MDDA) and 571 to 680 (PPSI…QWSP). Composition is skewed to polar residues over residues 590 to 600 (RTGSQEGTSME) and 643 to 680 (PESQ…QWSP). 2 positions are modified to phosphoserine: Ser-653 and Ser-670.

Belongs to the hid-1 family.

The protein resides in the cytoplasm. It is found in the golgi apparatus membrane. The chain is Protein HID1 (Hid1) from Mus musculus (Mouse).